The chain runs to 324 residues: MELTGVTAQSIFDDNAADLKLSWVAGLEGADRAFDVDFAKEATSAADLVGHLNLIHPNRIQVLGKPEITYYQRLSEENRKRQMGELILLEPPFLVVADGVDPPPDLELRCTRSSTPLFTSPISSAAVIDHLRLYLSRISAPRVTMHGVFLDILGMGVLIMGDSGLGKSELGLELISRGHGLVADDAVDFVRLGPDFIEGRCPPLLQNLLEVRGLGLLDIKTIFGETAVRRKMKIKLIVQLVRRNDGEFERLPLDSQYMDVLGLPIHMVKIQVAAGRNLAVLVEAAVRNTILRLRGIDTLRDFMDRQRAAMQAEAASHSPQGRLL.

Catalysis depends on residues His-146 and Lys-167. Position 161 to 168 (161 to 168 (GDSGLGKS)) interacts with ATP. Position 168 (Ser-168) interacts with Mg(2+). Asp-185 (proton acceptor; for phosphorylation activity. Proton donor; for dephosphorylation activity) is an active-site residue. The important for the catalytic mechanism of both phosphorylation and dephosphorylation stretch occupies residues 209–218 (LEVRGLGLLD). Glu-210 provides a ligand contact to Mg(2+). Residue Arg-250 is part of the active site. An important for the catalytic mechanism of dephosphorylation region spans residues 271–276 (QVAAGR).

It belongs to the HPrK/P family. As to quaternary structure, homohexamer. It depends on Mg(2+) as a cofactor.

The catalysed reaction is [HPr protein]-L-serine + ATP = [HPr protein]-O-phospho-L-serine + ADP + H(+). The enzyme catalyses [HPr protein]-O-phospho-L-serine + phosphate + H(+) = [HPr protein]-L-serine + diphosphate. Functionally, catalyzes the ATP- as well as the pyrophosphate-dependent phosphorylation of a specific serine residue in HPr, a phosphocarrier protein of the phosphoenolpyruvate-dependent sugar phosphotransferase system (PTS). HprK/P also catalyzes the pyrophosphate-producing, inorganic phosphate-dependent dephosphorylation (phosphorolysis) of seryl-phosphorylated HPr (P-Ser-HPr). The protein is HPr kinase/phosphorylase of Ralstonia nicotianae (strain ATCC BAA-1114 / GMI1000) (Ralstonia solanacearum).